The following is a 134-amino-acid chain: Large ribosomal subunit protein bL20 (134 aa).

This sequence belongs to the bacterial ribosomal protein bL20 family.

Its function is as follows. Binds directly to 23S ribosomal RNA and is necessary for the in vitro assembly process of the 50S ribosomal subunit. It is not involved in the protein synthesizing functions of that subunit. The sequence is that of Large ribosomal subunit protein bL20 from Rhizobium meliloti (strain 1021) (Ensifer meliloti).